We begin with the raw amino-acid sequence, 63 residues long: uncharacterized protein (63 aa).

This is an uncharacterized protein from Saccharomyces cerevisiae (strain ATCC 204508 / S288c) (Baker's yeast).